The following is a 308-amino-acid chain: Homoserine kinase (308 aa).

95–105 (PQSRGLGSSAA) contributes to the ATP binding site.

It belongs to the GHMP kinase family. Homoserine kinase subfamily.

It is found in the cytoplasm. It catalyses the reaction L-homoserine + ATP = O-phospho-L-homoserine + ADP + H(+). It functions in the pathway amino-acid biosynthesis; L-threonine biosynthesis; L-threonine from L-aspartate: step 4/5. Functionally, catalyzes the ATP-dependent phosphorylation of L-homoserine to L-homoserine phosphate. The chain is Homoserine kinase from Corynebacterium diphtheriae (strain ATCC 700971 / NCTC 13129 / Biotype gravis).